A 106-amino-acid chain; its full sequence is Ribosomal protein eL42-like (106 aa).

Residues 26–53 (YKKGKDSLYAQGRRRYDRKQSGYGGQTK) are disordered. At lysine 53 the chain carries N6-methyllysine.

This sequence belongs to the eukaryotic ribosomal protein eL42 family. In terms of tissue distribution, ubiquitously expressed.

It is found in the cytoplasm. This Homo sapiens (Human) protein is Ribosomal protein eL42-like (RPL36AL).